The chain runs to 751 residues: Ribosomal RNA large subunit methyltransferase K/L (751 aa).

Positions L44 to L155 constitute a THUMP domain.

This sequence belongs to the methyltransferase superfamily. RlmKL family.

It is found in the cytoplasm. It catalyses the reaction guanosine(2445) in 23S rRNA + S-adenosyl-L-methionine = N(2)-methylguanosine(2445) in 23S rRNA + S-adenosyl-L-homocysteine + H(+). The enzyme catalyses guanosine(2069) in 23S rRNA + S-adenosyl-L-methionine = N(2)-methylguanosine(2069) in 23S rRNA + S-adenosyl-L-homocysteine + H(+). Its function is as follows. Specifically methylates the guanine in position 2445 (m2G2445) and the guanine in position 2069 (m7G2069) of 23S rRNA. The protein is Ribosomal RNA large subunit methyltransferase K/L of Cellvibrio japonicus (strain Ueda107) (Pseudomonas fluorescens subsp. cellulosa).